Consider the following 276-residue polypeptide: Putative ankyrin repeat protein R838 (276 aa).

ANK repeat units follow at residues 134–163, 164–193, 195–223, and 225–253; these read DGDN…DPRS, DYDY…DISS, NHWP…DVRA, and NYNP…EIGS. Positions 254 to 276 are disordered; the sequence is VSDDDTYDSDSSDYSEDDSESIN. Residues 255–276 show a composition bias toward acidic residues; the sequence is SDDDTYDSDSSDYSEDDSESIN.

The polypeptide is Putative ankyrin repeat protein R838 (Acanthamoeba polyphaga (Amoeba)).